The following is a 91-amino-acid chain: Acyl carrier protein (91 aa).

In terms of domain architecture, Carrier spans 4–79 (QQILDKVQSI…QAVDYILQHK (76 aa)). The residue at position 39 (S39) is an O-(pantetheine 4'-phosphoryl)serine.

This sequence belongs to the acyl carrier protein (ACP) family. 4'-phosphopantetheine is transferred from CoA to a specific serine of apo-ACP by AcpS. This modification is essential for activity because fatty acids are bound in thioester linkage to the sulfhydryl of the prosthetic group.

The protein resides in the plastid. It localises to the chloroplast. The protein operates within lipid metabolism; fatty acid biosynthesis. Functionally, carrier of the growing fatty acid chain in fatty acid biosynthesis. This is Acyl carrier protein from Cyanidioschyzon merolae (strain NIES-3377 / 10D) (Unicellular red alga).